The chain runs to 1295 residues: DNA-directed RNA polymerase subunit beta' (1295 aa).

Zn(2+) contacts are provided by cysteine 60, cysteine 62, cysteine 75, and cysteine 78. Mg(2+) is bound by residues aspartate 516, aspartate 518, and aspartate 520. The Zn(2+) site is built by cysteine 841, cysteine 914, cysteine 921, and cysteine 924.

It belongs to the RNA polymerase beta' chain family. As to quaternary structure, the RNAP catalytic core consists of 2 alpha, 1 beta, 1 beta' and 1 omega subunit. When a sigma factor is associated with the core the holoenzyme is formed, which can initiate transcription. It depends on Mg(2+) as a cofactor. The cofactor is Zn(2+).

It catalyses the reaction RNA(n) + a ribonucleoside 5'-triphosphate = RNA(n+1) + diphosphate. Its function is as follows. DNA-dependent RNA polymerase catalyzes the transcription of DNA into RNA using the four ribonucleoside triphosphates as substrates. This chain is DNA-directed RNA polymerase subunit beta', found in Dehalococcoides mccartyi (strain ATCC BAA-2100 / JCM 16839 / KCTC 5957 / BAV1).